The primary structure comprises 84 residues: Small ribosomal subunit protein uS17 (84 aa).

The protein belongs to the universal ribosomal protein uS17 family. Part of the 30S ribosomal subunit.

Functionally, one of the primary rRNA binding proteins, it binds specifically to the 5'-end of 16S ribosomal RNA. This chain is Small ribosomal subunit protein uS17, found in Porphyromonas gingivalis (strain ATCC 33277 / DSM 20709 / CIP 103683 / JCM 12257 / NCTC 11834 / 2561).